The following is a 365-amino-acid chain: Chorismate synthase (365 aa).

Arg46 contacts NADP(+). FMN is bound by residues 123–125, 241–242, Gly281, 296–300, and Arg322; these read RSS, NG, and KPTPS.

This sequence belongs to the chorismate synthase family. As to quaternary structure, homotetramer. Requires FMNH2 as cofactor.

The catalysed reaction is 5-O-(1-carboxyvinyl)-3-phosphoshikimate = chorismate + phosphate. Its pathway is metabolic intermediate biosynthesis; chorismate biosynthesis; chorismate from D-erythrose 4-phosphate and phosphoenolpyruvate: step 7/7. Its function is as follows. Catalyzes the anti-1,4-elimination of the C-3 phosphate and the C-6 proR hydrogen from 5-enolpyruvylshikimate-3-phosphate (EPSP) to yield chorismate, which is the branch point compound that serves as the starting substrate for the three terminal pathways of aromatic amino acid biosynthesis. This reaction introduces a second double bond into the aromatic ring system. This chain is Chorismate synthase, found in Helicobacter pylori (strain ATCC 700392 / 26695) (Campylobacter pylori).